Here is a 269-residue protein sequence, read N- to C-terminus: Eukaryotic translation initiation factor 3 subunit G-1 (269 aa).

The RRM domain maps to 188–266 (AAIRISNLSE…LILSVEWSKP (79 aa)).

The protein belongs to the eIF-3 subunit G family. Component of the eukaryotic translation initiation factor 3 (eIF-3) complex. The eIF-3 complex interacts with pix.

It is found in the cytoplasm. Functionally, RNA-binding component of the eukaryotic translation initiation factor 3 (eIF-3) complex, which is involved in protein synthesis of a specialized repertoire of mRNAs and, together with other initiation factors, stimulates binding of mRNA and methionyl-tRNAi to the 40S ribosome. The eIF-3 complex specifically targets and initiates translation of a subset of mRNAs involved in cell proliferation. This subunit can bind 18S rRNA. The sequence is that of Eukaryotic translation initiation factor 3 subunit G-1 from Drosophila sechellia (Fruit fly).